A 645-amino-acid chain; its full sequence is Protein disulfide-isomerase A4 (645 aa).

Positions 1 to 20 (MRPRKAFLLLLLLGLVQLLA) are cleaved as a signal peptide. 2 Thioredoxin domains span residues 21–169 (VAGA…EVSQ) and 158–301 (EEIV…EFLK). The interval 24-58 (AEGPDEDSSNRENAIEDEEEEEEEDDDEEEDDLEV) is disordered. The span at 38-58 (IEDEEEEEEEDDDEEEDDLEV) shows a compositional bias: acidic residues. A CXXC motif is present at residues 91 to 94 (CGHC). 2 disulfide bridges follow: Cys91-Cys94 and Cys206-Cys209. Residue Lys366 is modified to N6-acetyllysine. The Thioredoxin 3 domain maps to 505–636 (FKKGKLKPVI…LSKFIEEHAT (132 aa)). A CXXC motif is present at residues 555 to 558 (CGHC). Residues Cys555 and Cys558 are joined by a disulfide bond. The short motif at 642 to 645 (KEEL) is the Prevents secretion from ER element.

This sequence belongs to the protein disulfide isomerase family. In terms of assembly, part of a large chaperone multiprotein complex comprising DNAJB11, HSP90B1, HSPA5, HYOU, PDIA2, PDIA4, PDIA6, PPIB, SDF2L1, UGGT1 and very small amounts of ERP29, but not, or at very low levels, CALR nor CANX. Component of a complex containing at least CRELD2, MANF, MATN3 and PDIA4. As to quaternary structure, (Microbial infection) Interacts with Human astrovirus-1 and Human astrovirus-8 spike protein VP25; this interaction seems to facilitate the uncoating during virus entry into the cell. Does not interact with Human astrovirus-2 spike protein VP25.

It localises to the endoplasmic reticulum lumen. The protein localises to the melanosome. The catalysed reaction is Catalyzes the rearrangement of -S-S- bonds in proteins.. This chain is Protein disulfide-isomerase A4 (PDIA4), found in Homo sapiens (Human).